We begin with the raw amino-acid sequence, 304 residues long: Probable WRKY transcription factor 29 (304 aa).

Disordered regions lie at residues 76 to 96 and 185 to 236; these read LPED…GCLL and YTNE…IPSA. The segment covering 78 to 88 has biased composition (basic and acidic residues); the sequence is EDSKPFRDDKK. The WRKY DNA-binding region spans 128-194; that stretch reads KEENLLSDAW…YTNEHNHELP (67 aa). Composition is skewed to polar residues over residues 196–213 and 225–236; these read RRNS…QPKP and SSPTSNPMIPSA.

The protein belongs to the WRKY group II-e family.

It is found in the nucleus. Transcription factor involved in the expression of defense genes in innate immune response of plants. Interacts specifically with the W box (5'-(T)TGAC[CT]-3'), a frequently occurring elicitor-responsive cis-acting element. Activates WRKY 22, SIRK and its own promoters. The sequence is that of Probable WRKY transcription factor 29 (WRKY29) from Arabidopsis thaliana (Mouse-ear cress).